The following is a 596-amino-acid chain: RNA-binding protein involved in heterochromatin assembly dri1 (596 aa).

Phosphoserine is present on Ser176. An RRM domain is found at 236–314 (KIVHVAGLTN…RMLEIIPSST (79 aa)). The segment at 335–364 (RPGDWNCPMCGFSNFQRRTSCFRCSFPGPT) adopts a RanBP2-type 1 zinc-finger fold. Ser429 carries the phosphoserine modification. 2 RanBP2-type zinc fingers span residues 437-468 (RAGD…SRAT) and 552-580 (DQGD…PHYS).

In terms of assembly, interacts with dpb4. Interacts with chp1.

It is found in the chromosome. It localises to the nucleus. The protein localises to the cytoplasm. The protein resides in the cytoplasmic granule. Functionally, mediates heterochromatin assembly by promoting RNAi-mediated heterochromatin silencing and histone deacetylation. Binds pericetromeric transcripts and recruits the RNA-induced transcriptional silencing (RITS) complex to heterochromatin. Recruits sir2 to chromatin to promote deacetylation of 'Lys-9' of histone H3. Involved in bipolar spindle assembly during mitosis. Required for proper localization of kinesin-14/Klp2 on the spindle microtubules. The protein is RNA-binding protein involved in heterochromatin assembly dri1 of Schizosaccharomyces pombe (strain 972 / ATCC 24843) (Fission yeast).